The sequence spans 133 residues: Interleukin-4 (133 aa).

The signal sequence occupies residues 1–24; the sequence is MGLTYQLIPALVCLLAFTSTFVHG. N-linked (GlcNAc...) asparagine glycans are attached at residues Asn28, Asn45, Asn62, Asn84, Asn96, and Asn102. 2 disulfides stabilise this stretch: Cys48–Cys85 and Cys70–Cys113.

This sequence belongs to the IL-4/IL-13 family.

The protein localises to the secreted. Participates in at least several B-cell activation processes as well as of other cell types. It is a costimulator of DNA-synthesis. It induces the expression of class II MHC molecules on resting B-cells. It enhances both secretion and cell surface expression of IgE and IgG1. It also regulates the expression of the low affinity Fc receptor for IgE (CD23) on both lymphocytes and monocytes. Positively regulates IL31RA expression in macrophages. Stimulates autophagy in dendritic cells by interfering with mTORC1 signaling and through the induction of RUFY4. This Felis catus (Cat) protein is Interleukin-4 (IL4).